The sequence spans 125 residues: Small ribosomal subunit protein bS6 (125 aa).

The protein belongs to the bacterial ribosomal protein bS6 family.

Functionally, binds together with bS18 to 16S ribosomal RNA. This Campylobacter jejuni subsp. jejuni serotype O:23/36 (strain 81-176) protein is Small ribosomal subunit protein bS6.